The chain runs to 341 residues: Processive diacylglycerol beta-glycosyltransferase (341 aa).

The protein belongs to the glycosyltransferase 2 family. Mg(2+) serves as cofactor.

The protein resides in the cell membrane. The enzyme catalyses a 1,2-diacyl-sn-glycerol + UDP-alpha-D-glucose = a 1,2-diacyl-3-O-(beta-D-glucopyranosyl)-sn-glycerol + UDP + H(+). It carries out the reaction a 1,2-diacyl-sn-glycerol + UDP-alpha-D-galactose = a 1,2-diacyl-3-O-(beta-D-galactosyl)-sn-glycerol + UDP + H(+). The catalysed reaction is a 1,2-diacyl-3-O-(beta-D-glucopyranosyl)-sn-glycerol + UDP-alpha-D-glucose = a 1,2-diacyl-3-O-(beta-D-Glc-(1-&gt;6)-beta-D-Glc)-sn-glycerol + UDP + H(+). It catalyses the reaction a 1,2-diacyl-3-O-(beta-D-galactosyl)-sn-glycerol + UDP-alpha-D-galactose = a 1,2-diacyl-3-O-[beta-D-galactosyl-(1-&gt;6)-beta-D-galactosyl]-sn-glycerol + UDP + H(+). It participates in glycolipid metabolism; diglucosyl-diacylglycerol biosynthesis. With respect to regulation, activated by the negatively charged lipid dioleoylphosphatidylglycerol (DOPG) and inhibited by N-(n-nonyl)deoxygalactonojirimycin (C9J). Functionally, processive glycosyltransferase involved in the biosynthesis of both the non-bilayer-prone beta-monoglycosyldiacylglycerol and the bilayer-forming membrane lipid beta-diglycosyldiacylglycerol. These components contribute to regulate the properties and stability of the membrane. Catalyzes sequentially the transfers of glucosyl or galactosyl residues from UDP-Glc or UDP-Gal to diacylglycerol (DAG) acceptor to form the corresponding beta-glycosyl-DAG (3-O-(beta-D-glycopyranosyl)-1,2-diacyl-sn-glycerol), which then acts as acceptor to give beta-diglycosyl-DAG product (3-O-(beta-D-glycopyranosyl-beta-(1-&gt;6)-D-glycopyranosyl)-1,2-diacyl-sn-glycerol). Dioleoylglycerol (DOG) is a preferred sugar acceptor than 3-O-(beta-D-glucopyranosyl)-1,2-dioleoyl-sn-glycerol. The chain is Processive diacylglycerol beta-glycosyltransferase from Mycoplasma genitalium (strain ATCC 33530 / DSM 19775 / NCTC 10195 / G37) (Mycoplasmoides genitalium).